The chain runs to 469 residues: MSALLRDADLNDFISPGLACVKPAQPQKVEKKPSFEVEVGIESSEPEKVSISLQDCLACAGCITSSEEILLSKQSHKVFLEKWSELEELDERSLAVSISPQCRLSLADYYSMCLADLDRCFQNFMKTKFNAKYVVGTQFGRSISISRINATLKDRVPENEGPLLCSVCPGFVLYAEKTKPELIPHMLDVKSPQQITGNLLKQADPTCYHLSIMPCFDKKLEASREECEKEVDCVITPKEFVAMLGDLSIDFKSYMTEYDSSKELCPSGWDYKLHWLSNEGSSSGGYAYQYLLSLQSSNPESDIITIEGKNSDVTEYRLVSKSKGVIASSSEVYGFRNIQNLVRKLSQSASVKKRGIKVKRRGQSVLKSGETSEKTTKVLTADPAKTDFVEVMACPSGCINGGGLLNEEKNANRRKQLAQDLSLAYTKVHSVNIPDIVHAYDDKSNDFKYNLRVIEPSTSSDVVAVGNTW.

The [4Fe-4S] cluster site is built by Cys-20, Cys-56, Cys-59, Cys-62, Cys-168, Cys-215, Cys-394, and Cys-398.

This sequence belongs to the NARF family.

Functionally, component of the cytosolic Fe/S protein assembly machinery. Required for maturation of extramitochondrial Fe/S proteins. May play a role in the transfer of pre-assembled Fe/S clusters to target apoproteins. In Kluyveromyces lactis (strain ATCC 8585 / CBS 2359 / DSM 70799 / NBRC 1267 / NRRL Y-1140 / WM37) (Yeast), this protein is Cytosolic Fe-S cluster assembly factor NAR1 (NAR1).